Here is a 231-residue protein sequence, read N- to C-terminus: Large ribosomal subunit protein uL1 (231 aa).

It belongs to the universal ribosomal protein uL1 family. In terms of assembly, part of the 50S ribosomal subunit.

Binds directly to 23S rRNA. The L1 stalk is quite mobile in the ribosome, and is involved in E site tRNA release. Its function is as follows. Protein L1 is also a translational repressor protein, it controls the translation of the L11 operon by binding to its mRNA. This chain is Large ribosomal subunit protein uL1, found in Stutzerimonas stutzeri (strain A1501) (Pseudomonas stutzeri).